A 419-amino-acid chain; its full sequence is MQNSHLSQQRFSDLALHRIVQQAIKEKGFEFCTPIQALSLPITLKGQDIAGQAQTGTGKTIAFLTATFHHLLQKNNINSSEQPRALILAPTRELVVQIANDANFLVQATGLKTGLAYGGEGYDKQLKVIDRGIDILIGTTGRVIDYVKQGIIRLDYIQVVVLDEADRMFDLGFIRDIRYLLRKCPVPQQRLTMLFSATLSYKVRELAFEHMNDPQYVEIEPLQKTGHRIREELFYPSNQDKMALLMTLLEEEWPERCIIFSNTKHRCEEIWGYLSADGHRVGLLTGDVMQKKRLSLLKQFTDGTLDVLVATDVAARGLHIPDVTHVFNYDLPDDCEDYVHRIGRTGRAGESGISISFACEEYAINLPAIEEYIGHSIPVSQYDAKALIEDLPTPHRIKRGAFDSRSNLQRTVKRLKKTY.

A Q motif motif is present at residues 9–37 (QRFSDLALHRIVQQAIKEKGFEFCTPIQA). A Helicase ATP-binding domain is found at 40–217 (LPITLKGQDI…FEHMNDPQYV (178 aa)). Position 53–60 (53–60 (AQTGTGKT)) interacts with ATP. A DEAD box motif is present at residues 163 to 166 (DEAD). The region spanning 241–388 (KMALLMTLLE…VSQYDAKALI (148 aa)) is the Helicase C-terminal domain.

Belongs to the DEAD box helicase family. RhlB subfamily. As to quaternary structure, component of the RNA degradosome, which is a multiprotein complex involved in RNA processing and mRNA degradation.

The protein resides in the cytoplasm. It catalyses the reaction ATP + H2O = ADP + phosphate + H(+). DEAD-box RNA helicase involved in RNA degradation. Has RNA-dependent ATPase activity and unwinds double-stranded RNA. The protein is ATP-dependent RNA helicase RhlB of Histophilus somni (strain 2336) (Haemophilus somnus).